The primary structure comprises 199 residues: Probable thymidylate kinase (199 aa).

9–16 (GIDGCGKT) contributes to the ATP binding site.

The protein belongs to the thymidylate kinase family.

The catalysed reaction is dTMP + ATP = dTDP + ADP. This chain is Probable thymidylate kinase, found in Methanococcus maripaludis (strain DSM 14266 / JCM 13030 / NBRC 101832 / S2 / LL).